Here is a 680-residue protein sequence, read N- to C-terminus: DNA-directed RNA polymerase subunit beta' (680 aa).

Zn(2+) contacts are provided by cysteine 69, cysteine 71, cysteine 87, and cysteine 90. Positions 489, 491, and 493 each coordinate Mg(2+).

This sequence belongs to the RNA polymerase beta' chain family. RpoC1 subfamily. As to quaternary structure, in plastids the minimal PEP RNA polymerase catalytic core is composed of four subunits: alpha, beta, beta', and beta''. When a (nuclear-encoded) sigma factor is associated with the core the holoenzyme is formed, which can initiate transcription. It depends on Mg(2+) as a cofactor. Zn(2+) is required as a cofactor.

The protein localises to the plastid. Its subcellular location is the chloroplast. The enzyme catalyses RNA(n) + a ribonucleoside 5'-triphosphate = RNA(n+1) + diphosphate. Its function is as follows. DNA-dependent RNA polymerase catalyzes the transcription of DNA into RNA using the four ribonucleoside triphosphates as substrates. This chain is DNA-directed RNA polymerase subunit beta', found in Cucumis sativus (Cucumber).